Reading from the N-terminus, the 216-residue chain is Adenylate kinase (216 aa).

10-15 (GAGKGT) provides a ligand contact to ATP. The tract at residues 30–59 (STGDMFRAAIKEGTPLGLQAKEYMDRGDLV) is NMP. AMP is bound by residues Thr31, Arg36, 57–59 (DLV), 85–88 (GFPR), and Gln92. The segment at 126 to 163 (GRRICKNCGATYHLVFNPPAKSGVCDKCGGELYQRADD) is LID. Position 127 (Arg127) interacts with ATP. The Zn(2+) site is built by Cys130 and Cys133. Position 136–137 (136–137 (TY)) interacts with ATP. Zn(2+)-binding residues include Cys150 and Cys153. AMP-binding residues include Arg160 and Arg171. Residue Gln199 coordinates ATP.

The protein belongs to the adenylate kinase family. Monomer.

The protein resides in the cytoplasm. It carries out the reaction AMP + ATP = 2 ADP. The protein operates within purine metabolism; AMP biosynthesis via salvage pathway; AMP from ADP: step 1/1. In terms of biological role, catalyzes the reversible transfer of the terminal phosphate group between ATP and AMP. Plays an important role in cellular energy homeostasis and in adenine nucleotide metabolism. This Geobacillus sp. (strain WCH70) protein is Adenylate kinase.